A 308-amino-acid polypeptide reads, in one-letter code: Oxygen-dependent coproporphyrinogen-III oxidase (308 aa).

A substrate-binding site is contributed by S92. A divalent metal cation is bound by residues H96 and H106. The Proton donor role is filled by H106. 108–110 (NVR) provides a ligand contact to substrate. 2 residues coordinate a divalent metal cation: H145 and H175. The important for dimerization stretch occupies residues 240–275 (YVEFNLVWDRGTLFGLQTGGRTESILMSMPPLVRWE). Substrate is bound at residue 258-260 (GGR).

Belongs to the aerobic coproporphyrinogen-III oxidase family. Homodimer. The cofactor is a divalent metal cation.

It localises to the cytoplasm. It catalyses the reaction coproporphyrinogen III + O2 + 2 H(+) = protoporphyrinogen IX + 2 CO2 + 2 H2O. It participates in porphyrin-containing compound metabolism; protoporphyrin-IX biosynthesis; protoporphyrinogen-IX from coproporphyrinogen-III (O2 route): step 1/1. Functionally, involved in the heme biosynthesis. Catalyzes the aerobic oxidative decarboxylation of propionate groups of rings A and B of coproporphyrinogen-III to yield the vinyl groups in protoporphyrinogen-IX. In Salmonella paratyphi A (strain ATCC 9150 / SARB42), this protein is Oxygen-dependent coproporphyrinogen-III oxidase.